Here is a 277-residue protein sequence, read N- to C-terminus: 3-methyl-2-oxobutanoate hydroxymethyltransferase (277 aa).

Residues Asp43 and Asp82 each contribute to the Mg(2+) site. Residues 43–44 (DS), Asp82, and Lys112 contribute to the 3-methyl-2-oxobutanoate site. Glu114 provides a ligand contact to Mg(2+). Glu181 acts as the Proton acceptor in catalysis.

The protein belongs to the PanB family. In terms of assembly, homodecamer; pentamer of dimers. The cofactor is Mg(2+).

The protein localises to the cytoplasm. The catalysed reaction is 3-methyl-2-oxobutanoate + (6R)-5,10-methylene-5,6,7,8-tetrahydrofolate + H2O = 2-dehydropantoate + (6S)-5,6,7,8-tetrahydrofolate. It participates in cofactor biosynthesis; (R)-pantothenate biosynthesis; (R)-pantoate from 3-methyl-2-oxobutanoate: step 1/2. In terms of biological role, catalyzes the reversible reaction in which hydroxymethyl group from 5,10-methylenetetrahydrofolate is transferred onto alpha-ketoisovalerate to form ketopantoate. The polypeptide is 3-methyl-2-oxobutanoate hydroxymethyltransferase (Listeria monocytogenes serotype 4b (strain CLIP80459)).